The chain runs to 399 residues: Argininosuccinate synthase (399 aa).

Residue 9 to 17 (AYSGGLDTS) participates in ATP binding. Tyr87 contacts L-citrulline. Gly117 provides a ligand contact to ATP. L-aspartate-binding residues include Thr119, Asn123, and Asp124. L-citrulline is bound at residue Asn123. L-citrulline contacts are provided by Arg127, Ser176, Ser185, Glu261, and Tyr273.

It belongs to the argininosuccinate synthase family. Type 1 subfamily. In terms of assembly, homotetramer.

Its subcellular location is the cytoplasm. It catalyses the reaction L-citrulline + L-aspartate + ATP = 2-(N(omega)-L-arginino)succinate + AMP + diphosphate + H(+). It participates in amino-acid biosynthesis; L-arginine biosynthesis; L-arginine from L-ornithine and carbamoyl phosphate: step 2/3. The polypeptide is Argininosuccinate synthase (Chlorobium chlorochromatii (strain CaD3)).